Reading from the N-terminus, the 107-residue chain is Regulatory protein SoxS (107 aa).

The HTH araC/xylS-type domain occupies 8–106; it reads QTLIEWIDEH…DRTPSDYRHR (99 aa). 2 DNA-binding regions (H-T-H motif) span residues 25-46 and 73-96; these read DVVA…RTVT and IFDI…RREF.

It localises to the cytoplasm. Functionally, transcriptional activator of the superoxide response regulon of E.coli that includes at least 10 genes such as sodA, nfo, zwf and micF. Binds the DNA sequence 5'-GCACN(7)CAA-3'. It also facilitates the subsequent binding of RNA polymerase to the micF and the nfo promoters. This is Regulatory protein SoxS (soxS) from Salmonella typhimurium (strain LT2 / SGSC1412 / ATCC 700720).